The primary structure comprises 75 residues: MRKYLSARSMCCSFFSCAKNCATLGLDSTEGRQFLAVGPQPFASLEGFHGEGGDCLFTTFPPLSIPRRRFCAGHA.

The N-terminal stretch at 1–18 is a signal peptide; that stretch reads MRKYLSARSMCCSFFSCA.

This is an uncharacterized protein from Treponema pallidum (strain Nichols).